The following is a 486-amino-acid chain: Mogroside I-E synthase (486 aa).

The UDP-alpha-D-glucose site is built by serine 302, cysteine 360, glutamine 362, tryptophan 380, asparagine 381, serine 382, glutamate 385, aspartate 401, and glutamine 402.

Belongs to the UDP-glycosyltransferase family. In terms of tissue distribution, highly expressed in young fruits 15 days after anthesis (15-DAA).

It catalyses the reaction mogrol + UDP-alpha-D-glucose = mogroside IE + UDP + H(+). It carries out the reaction mogroside I-A1 + UDP-alpha-D-glucose = mogroside IIE + UDP + H(+). The catalysed reaction is mogroside II-A1 + UDP-alpha-D-glucose = mogroside IIIX + UDP + H(+). The enzyme catalyses mogroside II-A + UDP-alpha-D-glucose = mogroside III + UDP + H(+). It participates in secondary metabolite biosynthesis; terpenoid biosynthesis. Its function is as follows. UDP-glycosyltransferase involved in the biosynthesis of cucurbitacin and mogroside tetracyclic triterpene natural products (e.g. siamenoside I and mogrosides IV, V and VI). Cucurbitacins have cytotoxic properties and exhibit deterrent taste as a defense barrier against herbivores. Mogrosides are nonsugar highly oxygenated compounds used as high-intensity zero-calorie sweeteners; they also possess pharmacological properties such as regulating immunity, lowering blood sugar and lipid levels, protecting the liver, and acting as antioxidants and antitumor agents. Catalyzes the C3 primary glucosylation of mogrol, mogroside I-A1, mogroside II-A1 and mogroside II-A. The protein is Mogroside I-E synthase of Siraitia grosvenorii (Monk's fruit).